Consider the following 388-residue polypeptide: Chorismate synthase (388 aa).

NADP(+) contacts are provided by R39 and R45. FMN is bound by residues 130–132 (RSS), 251–252 (NA), G296, 311–315 (KPIPT), and R337.

It belongs to the chorismate synthase family. As to quaternary structure, homotetramer. FMNH2 serves as cofactor.

It carries out the reaction 5-O-(1-carboxyvinyl)-3-phosphoshikimate = chorismate + phosphate. It functions in the pathway metabolic intermediate biosynthesis; chorismate biosynthesis; chorismate from D-erythrose 4-phosphate and phosphoenolpyruvate: step 7/7. Its function is as follows. Catalyzes the anti-1,4-elimination of the C-3 phosphate and the C-6 proR hydrogen from 5-enolpyruvylshikimate-3-phosphate (EPSP) to yield chorismate, which is the branch point compound that serves as the starting substrate for the three terminal pathways of aromatic amino acid biosynthesis. This reaction introduces a second double bond into the aromatic ring system. This is Chorismate synthase from Streptococcus pneumoniae serotype 19F (strain G54).